We begin with the raw amino-acid sequence, 542 residues long: MLYSLLLCECLWLITAYAHDDEWIDPTDMLNYDAASGRMRKSQVKYGISEKEEVNPDLSCANELSECYNRLDSLTYKIDECEKQKRKDYESQSNPVFRRYLNKILIETKKLGLPDENKHDMHYDAEIILKRQTLLEIQKFLSGEDWKPGALDDALSDILINFKFHDFETWKWRFEEFFGVDPYNVFMVLLCLLCIVALVATELWTYVRWYTQLKRVFFISFLISLGWNWMYLYKLAFAQHQAEVAKMEPLNNVCAEKMNWSGSLWEWLRSSWTYKDDPCQKYYELLLVNPIWLVPPTKALAVTFTNFVTEPLKHVGKGAGEFIKALMKEIPVLLHIPVLIIMALAVLSFCYGAGKSVNMLRHVGGPEREAPQALQAGERRRQQKIDYRPHGGAGDADFYYRGQISPIEQGPNDNTYEGRRDVLRERDVGLRFQTGNKSPEVLRPFDLQEAEAREHPKVVPGLKSPNLESKPREMGEIPGESTPTESSTESSQPAKPVSGQKVSEGVEGCPAVEKAQLRTDAAGGPEEGSTCSPASTAVEVCG.

An N-terminal signal peptide occupies residues 1-18 (MLYSLLLCECLWLITAYA). Topologically, residues 19–184 (HDDEWIDPTD…EEFFGVDPYN (166 aa)) are lumenal. The helical transmembrane segment at 185–205 (VFMVLLCLLCIVALVATELWT) threads the bilayer. Residues 206–216 (YVRWYTQLKRV) lie on the Cytoplasmic side of the membrane. A helical membrane pass occupies residues 217–237 (FFISFLISLGWNWMYLYKLAF). At 238–329 (AQHQAEVAKM…GEFIKALMKE (92 aa)) the chain is on the lumenal side. The helical transmembrane segment at 330-350 (IPVLLHIPVLIIMALAVLSFC) threads the bilayer. Residues 351 to 542 (YGAGKSVNML…PASTAVEVCG (192 aa)) are Cytoplasmic-facing. The interval 369–394 (EAPQALQAGERRRQQKIDYRPHGGAG) is disordered. Residues 377 to 389 (GERRRQQKIDYRP) are compositionally biased toward basic and acidic residues. Residues serine 438 and serine 464 each carry the phosphoserine modification. Residues 452 to 542 (AREHPKVVPG…PASTAVEVCG (91 aa)) are disordered. Residues 480–491 (ESTPTESSTESS) show a composition bias toward low complexity. Position 482 is a phosphothreonine (threonine 482). Position 532 is a phosphoserine (serine 532).

The protein belongs to the chloride channel MCLC family. As to quaternary structure, homomultimers. Interacts with mitochondrial protein PIGBOS1 (via C-terminus); the interaction occurs at the mitochondria-associated endoplasmic reticulum (ER) membrane, a zone of contact between the ER and mitochondrial membranes, but does not appear to play a role in ER-mitochondria tethering and is not affected by ER stress. Interacts with CALR.

It is found in the endoplasmic reticulum membrane. It catalyses the reaction chloride(in) = chloride(out). It carries out the reaction bromide(in) = bromide(out). The catalysed reaction is nitrate(in) = nitrate(out). The enzyme catalyses fluoride(in) = fluoride(out). In terms of biological role, anion-selective channel with Ca(2+)-dependent and voltage-independent gating. Permeable to small monovalent anions with selectivity for bromide &gt; chloride &gt; nitrate &gt; fluoride. Operates in the endoplasmic reticulum (ER) membrane where it mediates chloride efflux to compensate for the loss of positive charges from the ER lumen upon Ca(2+) release. Contributes to the maintenance of ER Ca(2+) pools and activation of unfolded protein response to prevent accumulation of misfolded proteins in the ER lumen. Particularly involved in ER homeostasis mechanisms underlying motor neurons and retinal photoreceptors survival. In Bos taurus (Bovine), this protein is Chloride channel CLIC-like protein 1 (CLCC1).